The chain runs to 204 residues: NAD(P)H dehydrogenase (quinone) FQR1 (204 aa).

The 188-residue stretch at 5-192 (VYIVYYSMYG…QQAFHQGQYI (188 aa)) folds into the Flavodoxin-like domain. FMN is bound by residues 11-15 (SMYGH), 112-165 (IFYS…SPYG), and His-136. Position 13 (Tyr-13) interacts with NAD(+).

Belongs to the WrbA family. FMN is required as a cofactor.

Its subcellular location is the cell membrane. The catalysed reaction is a quinone + NADH + H(+) = a quinol + NAD(+). The enzyme catalyses a quinone + NADPH + H(+) = a quinol + NADP(+). Its function is as follows. Catalyzes the transfer of electrons from NADH and NADPH to several quinones in vitro. May act as detoxification enzyme, and protect against auxin-induced oxidative stress. The polypeptide is NAD(P)H dehydrogenase (quinone) FQR1 (Arabidopsis thaliana (Mouse-ear cress)).